The primary structure comprises 322 residues: Beta-ketoacyl-[acyl-carrier-protein] synthase III (322 aa).

Active-site residues include Cys-112 and His-249. An ACP-binding region spans residues 250–254 (QANQR). The active site involves Asn-279.

It belongs to the thiolase-like superfamily. FabH family. In terms of assembly, homodimer.

It is found in the cytoplasm. It carries out the reaction malonyl-[ACP] + acetyl-CoA + H(+) = 3-oxobutanoyl-[ACP] + CO2 + CoA. The protein operates within lipid metabolism; fatty acid biosynthesis. Its function is as follows. Catalyzes the condensation reaction of fatty acid synthesis by the addition to an acyl acceptor of two carbons from malonyl-ACP. Catalyzes the first condensation reaction which initiates fatty acid synthesis and may therefore play a role in governing the total rate of fatty acid production. Possesses both acetoacetyl-ACP synthase and acetyl transacylase activities. Its substrate specificity determines the biosynthesis of branched-chain and/or straight-chain of fatty acids. In Caulobacter vibrioides (strain ATCC 19089 / CIP 103742 / CB 15) (Caulobacter crescentus), this protein is Beta-ketoacyl-[acyl-carrier-protein] synthase III.